We begin with the raw amino-acid sequence, 453 residues long: MGRTREAGCVAAGVVIGAGACYCVYRLAWGRDENEKIWDEDEESTDTSEIGVETVKGAKTSVGAGSGVKLQGDSKVKPEVNLGLEDCPGVKEKAHSGSHRGGGLEAKAKALFNTLKEQASAKAGKGARMGTITGNRTLAPSLPCPGGRGGGCHPTRSGSRAGGRASGKSKGKARSKSTRAPATTWPVRRGKFNFPYKIDDILSAPDLQKVLNILERTNDPFIQEVALVTLGNNAAYSFNQNAIRELGGVPIIAKLIKTKDPIIREKTYNALNNLSVNAENQGKIKTYISQVCDDTMVCRLDSAVQMAGLRLLTNMTVTNHYQHLLSYSFPDFFALLFLGNHFTKIQIMKLIINFTENPAMTRELVSCKVPSELISLFNKEWDREILLNILTLFENINDNIKNEGLASSRKEFSRSSLFFLFKESGVCVKKIKALANHNDLVVKVKVLKVLTKL.

Residues 1–6 (MGRTRE) lie on the Mitochondrial intermembrane side of the membrane. 2 mitochondrion outer membrane (MOM)-targeting sequence regions span residues 1 to 6 (MGRTRE) and 26 to 36 (RLAWGRDENEK). The helical; Signal-anchor transmembrane segment at 7–29 (AGCVAAGVVIGAGACYCVYRLAW) threads the bilayer. The Cytoplasmic portion of the chain corresponds to 30–453 (GRDENEKIWD…VKVLKVLTKL (424 aa)). The segment at 140-182 (PSLPCPGGRGGGCHPTRSGSRAGGRASGKSKGKARSKSTRAPA) is disordered. The span at 167 to 177 (GKSKGKARSKS) shows a compositional bias: basic residues. 4 ARM repeats span residues 195-235 (PYKI…NNAA), 237-276 (SFNQ…NLSV), 358-398 (PAMT…NIND), and 415-453 (SSLF…LTKL).

It belongs to the eutherian X-chromosome-specific Armcx family. Interacts with MIRO1.

The protein resides in the mitochondrion. Its subcellular location is the mitochondrion outer membrane. Regulates mitochondrial transport during axon regeneration. Increases the proportion of motile mitochondria by recruiting stationary mitochondria into the motile pool. Enhances mitochondria movement and neurite growth in both adult axons and embryonic neurons. Promotes neuronal survival and axon regeneration after nerve injury. May link mitochondria to the Trak1-kinesin motor complex via its interaction with MIRO1. The protein is Armadillo repeat-containing X-linked protein 1 (ARMCX1) of Pongo abelii (Sumatran orangutan).